The chain runs to 309 residues: Prepilin leader peptidase/N-methyltransferase (309 aa).

The helical transmembrane segment at 35-55 (MQLAFAIVLGLVVGSFINVVV) threads the bilayer. Zn(2+) contacts are provided by Cys96, Cys99, Cys121, and Cys124. The next 6 membrane-spanning stretches (helical) occupy residues 147 to 167 (LALFGPSGAALAAFGLCAALL), 183 to 203 (LTLPLLWAGLCVNLWGTFASL), 207 to 227 (VIGAIAGYLFLWCILWLFKLL), 230 to 250 (IEGIGYGDLKLLAALGAWLGW), 253 to 273 (LPQVVLIAAVAGAAVGLVATW), and 288 to 308 (FLAAGGAATLFFGTPFYLLLG).

This sequence belongs to the peptidase A24 family. Requires Zn(2+) as cofactor.

It is found in the cell inner membrane. The enzyme catalyses Typically cleaves a -Gly-|-Phe- bond to release an N-terminal, basic peptide of 5-8 residues from type IV prepilin, and then N-methylates the new N-terminal amino group, the methyl donor being S-adenosyl-L-methionine.. Its function is as follows. Plays an essential role in type IV pili and type II pseudopili formation by proteolytically removing the leader sequence from substrate proteins and subsequently monomethylating the alpha-amino group of the newly exposed N-terminal phenylalanine. This chain is Prepilin leader peptidase/N-methyltransferase (gspO), found in Burkholderia pseudomallei (strain K96243).